Consider the following 276-residue polypeptide: uncharacterized protein (276 aa).

This is an uncharacterized protein from Fowl adenovirus A serotype 1 (strain CELO / Phelps) (FAdV-1).